Reading from the N-terminus, the 643-residue chain is Methyl-accepting chemotaxis protein McpA (643 aa).

Residues 24–44 (ILLSACGVVVLAFALFTLYND) traverse the membrane as a helical segment. A Cache domain is found at 49–273 (NTIRQNIEAS…GLPSAQWYIG (225 aa)). A helical transmembrane segment spans residues 293–313 (IIAMLIAVAAIAGLLGLLIPV). The HAMP domain occupies 312 to 366 (PVLMSPLTTMGRAMRDIAEGEGDLTRRLAVQNKDEFGELATSFNRFVERIHASIS). One can recognise a Methyl-accepting transducer domain in the interval 371-607 (ATRLVHDLSE…SLNLDITQIN (237 aa)).

It belongs to the methyl-accepting chemotaxis (MCP) protein family.

The protein resides in the cell membrane. In terms of biological role, chemotactic-signal transducers respond to changes in the concentration of attractants and repellents in the environment, transduce a signal from the outside to the inside of the cell, and facilitate sensory adaptation through the variation of the level of methylation. McpA is a chemoreceptor that binds to 12 different L-amino acids and mediates chemotaxis toward these amino acids. The chain is Methyl-accepting chemotaxis protein McpA from Pseudomonas putida (strain ATCC 47054 / DSM 6125 / CFBP 8728 / NCIMB 11950 / KT2440).